Consider the following 295-residue polypeptide: Protein gurken (295 aa).

Positions 1 to 26 (MMQIPFTRIFKVIFVLSTIVAVTDCC) are cleaved as a signal peptide. The Extracellular segment spans residues 27–247 (SSRILLLREH…TAQRKVRMAH (221 aa)). Disordered regions lie at residues 78–111 (EASA…SIAA) and 124–175 (TDTW…NDKE). The span at 124-139 (TDTWLASESSTPITDS) shows a compositional bias: polar residues. 2 stretches are compositionally biased toward low complexity: residues 140 to 152 (ETVT…THTG) and 159 to 171 (SSSS…TPSP). The 46-residue stretch at 179-224 (QMLPCSEAYNTSFCLNGGHCFQHPMVNNTVFHSCLCVNDYDGERCA) folds into the EGF-like domain. 3 disulfide bridges follow: C183–C198, C192–C212, and C214–C223. Residues N188 and N205 are each glycosylated (N-linked (GlcNAc...) asparagine). An interaction with cni region spans residues 215–245 (VNDYDGERCAYKSWNGDYIYSPPTAQRKVRM). Residues 248–268 (IVFSFPVLLMLSSLYVLFAAV) form a helical membrane-spanning segment. Topologically, residues 269–295 (FMLRNVPDYRRKQQQLHLHKQRFFVRC) are cytoplasmic.

Interacts with cni. As to expression, expressed in nurse cells and oocyte up to oogenesis stage 7. Specifically accumulates in dorsal anterior corner of the oocyte during stages 9/10, at later stages expression is seen as an anterior ring. In stage 10 ovaries, it is concentrated between the oocyte nucleus and the adjacent oolemma. During vitellogenesis stage it can be detected at the oocyte surface, especially on the microvilli. It is also found at the microvilli covering the apical surface of the follicular epithelium and within follicle cells.

The protein localises to the cell membrane. Critical for defining the anterior-posterior and dorsal-ventral axes of the egg. May signal directly to dorsal follicle cells through the receptor torpedo (top). During oogenesis this signaling pathway instructs follicle cells to follow a dorsal pathway of development rather than the default ventral pathway. This chain is Protein gurken (grk), found in Drosophila melanogaster (Fruit fly).